The chain runs to 215 residues: Cytochrome b6 (215 aa).

A helical membrane pass occupies residues Ile-32–Phe-52. Cys-35 contributes to the heme c binding site. 2 residues coordinate heme b: His-86 and His-100. 3 helical membrane passes run Ala-90–Phe-110, Leu-116–Tyr-136, and Leu-186–Ile-206. Residues His-187 and His-202 each contribute to the heme b site.

The protein belongs to the cytochrome b family. PetB subfamily. The 4 large subunits of the cytochrome b6-f complex are cytochrome b6, subunit IV (17 kDa polypeptide, PetD), cytochrome f and the Rieske protein, while the 4 small subunits are PetG, PetL, PetM and PetN. The complex functions as a dimer. The cofactor is heme b. Requires heme c as cofactor.

The protein localises to the plastid. It localises to the chloroplast thylakoid membrane. Functionally, component of the cytochrome b6-f complex, which mediates electron transfer between photosystem II (PSII) and photosystem I (PSI), cyclic electron flow around PSI, and state transitions. The polypeptide is Cytochrome b6 (Nephroselmis olivacea (Green alga)).